The chain runs to 869 residues: H(+)/Cl(-) exchange transporter 6 (869 aa).

Residues 1–80 (MAGCRGSLCC…KKGRWYEVVK (80 aa)) lie on the Cytoplasmic side of the membrane. 2 consecutive transmembrane segments (helical) span residues 81-113 (WTVVFAIGVCTGLVGLFVDFFVQLFTQLKFGVV) and 128-150 (LSLLELLGFNLTFVFLASLLVLI). The short motif at 156 to 160 (GSGIP) is the Selectivity filter part_1 element. Residue serine 157 coordinates chloride. An intramembrane region (helical) is located at residues 159–166 (IPEIKCYL). Helical transmembrane passes span 176–194 (RLRTLLCKVFGVLFSVAGG) and 200–217 (EGPMIHSGAVVGAGLPQF). The Selectivity filter part_2 motif lies at 198-202 (GKEGP). 2 consecutive intramembrane regions (helical) follow at residues 241 to 253 (FVSAGAAAGIAAA) and 257 to 265 (PIGATLFSL). 3 consecutive transmembrane segments (helical) span residues 277 to 294 (TWKVLFCSMSATFTLNFF), 335 to 364 (GFFVVMGVIGGLLGATFNCLNKRLAKYRMR), and 371 to 392 (KLVRVLESLLVSLVTTLVVFVA). N-linked (GlcNAc...) asparagine glycans are attached at residues asparagine 410, asparagine 422, and asparagine 432. The next 2 helical transmembrane spans lie at 462–481 (PITLALFFVLYFLLACWTYG) and 487–511 (GLFVPSLLCGAAFGRLVANVLKSYI). Residues 487-491 (GLFVP) carry the Selectivity filter part_3 motif. Residue phenylalanine 489 participates in chloride binding. The segment at residues 519–533 (GTFSLIGAAALLGGV) is an intramembrane region (helical). The segment at residues 534 to 536 (VRM) is an intramembrane region (note=Loop between two helices). Positions 537–548 (TISLTVILIEST) form an intramembrane region, helical. An intramembrane region (note=Loop between two helices) is located at residues 549–552 (NEIT). A helical transmembrane segment spans residues 553-571 (YGLPIMITLMVAKWTGDFF). Residues 572-869 (NKGIYDIHVG…ARLRQHYQTI (298 aa)) lie on the Cytoplasmic side of the membrane. A chloride-binding site is contributed by tyrosine 576. The region spanning 605–662 (MEPNLTYVYPHTRIQSLVSILRTTVHHAFPVVTENRGNEKEFMKGNQLISNNIKFKKS) is the CBS 1 domain. Position 630–632 (630–632 (HHA)) interacts with ATP. Positions 668–687 (AGEQRRRSQSMKSYPSSELR) are disordered. Polar residues predominate over residues 677-686 (SMKSYPSSEL). The residue at position 773 (serine 773) is a Phosphoserine. The CBS 2 domain occupies 807–868 (MNPSPFTVSP…QARLRQHYQT (62 aa)). 849–852 (TRHN) is an ATP binding site.

This sequence belongs to the chloride channel (TC 2.A.49) family. ClC-6/CLCN6 subfamily. In terms of processing, N-glycosylated on several asparagine residues.

The protein resides in the late endosome membrane. The catalysed reaction is 2 chloride(in) + H(+)(out) = 2 chloride(out) + H(+)(in). Its function is as follows. Voltage-gated channel mediating the exchange of chloride ions against protons. Functions as antiporter and contributes to the acidification of the late endosome lumen. The CLC channel family contains both chloride channels and proton-coupled anion transporters that exchange chloride or another anion for protons. The presence of conserved gating glutamate residues is typical for family members that function as antiporters. The sequence is that of H(+)/Cl(-) exchange transporter 6 (CLCN6) from Oryctolagus cuniculus (Rabbit).